Consider the following 382-residue polypeptide: Probable protein phosphatase 2C 65 (382 aa).

A PPM-type phosphatase domain is found at 47–337; the sequence is HVSMSIKQGK…DDCAVVVLYL (291 aa). 2 residues coordinate Mn(2+): Asp83 and Gly84. Residues 107–126 are disordered; sequence KIRSSKSAGDENIENNSSQS. Residues Asp282 and Asp328 each coordinate Mn(2+).

The protein belongs to the PP2C family. It depends on Mg(2+) as a cofactor. Mn(2+) is required as a cofactor.

The catalysed reaction is O-phospho-L-seryl-[protein] + H2O = L-seryl-[protein] + phosphate. It catalyses the reaction O-phospho-L-threonyl-[protein] + H2O = L-threonyl-[protein] + phosphate. The polypeptide is Probable protein phosphatase 2C 65 (Arabidopsis thaliana (Mouse-ear cress)).